A 436-amino-acid chain; its full sequence is ATP-dependent protease ATPase subunit HslU (436 aa).

Residues Ile-18, 60 to 65 (GVGKTE), Asp-250, Glu-314, and Arg-386 each bind ATP.

The protein belongs to the ClpX chaperone family. HslU subfamily. As to quaternary structure, a double ring-shaped homohexamer of HslV is capped on each side by a ring-shaped HslU homohexamer. The assembly of the HslU/HslV complex is dependent on binding of ATP.

It is found in the cytoplasm. In terms of biological role, ATPase subunit of a proteasome-like degradation complex; this subunit has chaperone activity. The binding of ATP and its subsequent hydrolysis by HslU are essential for unfolding of protein substrates subsequently hydrolyzed by HslV. HslU recognizes the N-terminal part of its protein substrates and unfolds these before they are guided to HslV for hydrolysis. The chain is ATP-dependent protease ATPase subunit HslU from Mesorhizobium japonicum (strain LMG 29417 / CECT 9101 / MAFF 303099) (Mesorhizobium loti (strain MAFF 303099)).